Here is a 407-residue protein sequence, read N- to C-terminus: MSSSSLILLFSTLSLFLNVSLADNHTAVVITTSDTPPPLPPPSPPPRHNFTSSLMPGIAVVIAVLTAFFSLTFLLLLYVKHCKRRNGSVYVNHPQRFAITRYGGGYYNGGGVVGGRKNSGIDRSVIESLPVFRFGALSGHKDGLECAVCLARFEPTEVLRLLPKCKHAFHVECVDTWLDAHSTCPLCRYRVDPEDILLIGDCNSWFELQFSKDESNSVNNNPPGLTRFIPVSRISGRHSSAGERASRLNEIRTSSSYKSNPMSFRRSLDSSLKVNDAGEEKSESVAVNCLDRLQRKDGLLLIPNRESFEGRFEHRIIISGGNRDDQRWSEVRPSDLLYLRSEMILSDCRKLAAAEGGRDVINGRSVSELTGIERRRRWGGEPRQRQATAVISRWLAWSHRASASSIV.

The first 22 residues, 1-22 (MSSSSLILLFSTLSLFLNVSLA), serve as a signal peptide directing secretion. A helical membrane pass occupies residues 57–77 (GIAVVIAVLTAFFSLTFLLLL). The RING-type; atypical zinc finger occupies 146-188 (CAVCLARFEPTEVLRLLPKCKHAFHVECVDTWLDAHSTCPLCR).

The protein belongs to the RING-type zinc finger family. ATL subfamily.

Its subcellular location is the membrane. The catalysed reaction is S-ubiquitinyl-[E2 ubiquitin-conjugating enzyme]-L-cysteine + [acceptor protein]-L-lysine = [E2 ubiquitin-conjugating enzyme]-L-cysteine + N(6)-ubiquitinyl-[acceptor protein]-L-lysine.. Its pathway is protein modification; protein ubiquitination. The polypeptide is RING-H2 finger protein ATL43 (ATL43) (Arabidopsis thaliana (Mouse-ear cress)).